The sequence spans 294 residues: 4-hydroxy-tetrahydrodipicolinate synthase (294 aa).

Threonine 47 provides a ligand contact to pyruvate. Tyrosine 135 serves as the catalytic Proton donor/acceptor. Lysine 163 serves as the catalytic Schiff-base intermediate with substrate. Residue threonine 205 coordinates pyruvate.

It belongs to the DapA family. Homotetramer; dimer of dimers.

Its subcellular location is the cytoplasm. The enzyme catalyses L-aspartate 4-semialdehyde + pyruvate = (2S,4S)-4-hydroxy-2,3,4,5-tetrahydrodipicolinate + H2O + H(+). It participates in amino-acid biosynthesis; L-lysine biosynthesis via DAP pathway; (S)-tetrahydrodipicolinate from L-aspartate: step 3/4. Its function is as follows. Catalyzes the condensation of (S)-aspartate-beta-semialdehyde [(S)-ASA] and pyruvate to 4-hydroxy-tetrahydrodipicolinate (HTPA). The sequence is that of 4-hydroxy-tetrahydrodipicolinate synthase from Rickettsia felis (strain ATCC VR-1525 / URRWXCal2) (Rickettsia azadi).